Reading from the N-terminus, the 218-residue chain is MANSSPVYDWFQERLEIQDIADDVTSKYVPPHVNIFYCLGGITLVCFLIQFATGFAMTFYYKPTVTEAYSSVSYLMTDVSFGWLIRSVHRWSASMMVLMLILHVFRVYLTGGFKRPRELTWVTGVVMAVITVAFGVTGYSLPWDQVGYWAVKIVSGVPAAIPVVGDFMVELLRGGESVGQTTLTRFYSLHTFVLPWTLAVFMLMHFLMIRKQGISGPL.

Residues 35–55 (IFYCLGGITLVCFLIQFATGF) form a helical membrane-spanning segment. C38 provides a ligand contact to heme c. The heme b site is built by H89 and H103. 3 helical membrane passes run 93 to 113 (ASMM…TGGF), 119 to 139 (LTWV…VTGY), and 189 to 209 (LHTF…FLMI). Heme b-binding residues include H190 and H205.

It belongs to the cytochrome b family. PetB subfamily. In terms of assembly, the 4 large subunits of the cytochrome b6-f complex are cytochrome b6, subunit IV (17 kDa polypeptide, PetD), cytochrome f and the Rieske protein, while the 4 small subunits are PetG, PetL, PetM and PetN. The complex functions as a dimer. Heme b serves as cofactor. It depends on heme c as a cofactor.

The protein resides in the cellular thylakoid membrane. In terms of biological role, component of the cytochrome b6-f complex, which mediates electron transfer between photosystem II (PSII) and photosystem I (PSI), cyclic electron flow around PSI, and state transitions. The polypeptide is Cytochrome b6 (Prochlorococcus marinus (strain MIT 9211)).